The primary structure comprises 330 residues: Delta-aminolevulinic acid dehydratase (330 aa).

The active-site Schiff-base intermediate with substrate is K203. 5-aminolevulinate contacts are provided by R213 and R224. E240 lines the Mg(2+) pocket. K255 functions as the Schiff-base intermediate with substrate in the catalytic mechanism. 2 residues coordinate 5-aminolevulinate: S281 and Y320.

It belongs to the ALAD family. Homooctamer.

The enzyme catalyses 2 5-aminolevulinate = porphobilinogen + 2 H2O + H(+). It participates in porphyrin-containing compound metabolism; protoporphyrin-IX biosynthesis; coproporphyrinogen-III from 5-aminolevulinate: step 1/4. Catalyzes an early step in the biosynthesis of tetrapyrroles. Binds two molecules of 5-aminolevulinate per subunit, each at a distinct site, and catalyzes their condensation to form porphobilinogen. This chain is Delta-aminolevulinic acid dehydratase (hemB), found in Streptomyces coelicolor (strain ATCC BAA-471 / A3(2) / M145).